We begin with the raw amino-acid sequence, 234 residues long: Sugar fermentation stimulation protein homolog (234 aa).

The protein belongs to the SfsA family.

This Idiomarina loihiensis (strain ATCC BAA-735 / DSM 15497 / L2-TR) protein is Sugar fermentation stimulation protein homolog.